Consider the following 467-residue polypeptide: ATP synthase subunit beta (467 aa).

ATP is bound at residue Gly150 to Thr157.

Belongs to the ATPase alpha/beta chains family. F-type ATPases have 2 components, CF(1) - the catalytic core - and CF(0) - the membrane proton channel. CF(1) has five subunits: alpha(3), beta(3), gamma(1), delta(1), epsilon(1). CF(0) has three main subunits: a(1), b(2) and c(9-12). The alpha and beta chains form an alternating ring which encloses part of the gamma chain. CF(1) is attached to CF(0) by a central stalk formed by the gamma and epsilon chains, while a peripheral stalk is formed by the delta and b chains.

It is found in the cell inner membrane. The catalysed reaction is ATP + H2O + 4 H(+)(in) = ADP + phosphate + 5 H(+)(out). Its function is as follows. Produces ATP from ADP in the presence of a proton gradient across the membrane. The catalytic sites are hosted primarily by the beta subunits. In Vibrio alginolyticus, this protein is ATP synthase subunit beta.